The following is a 338-amino-acid chain: Homeobox protein ceh-20 (338 aa).

The PBC domain occupies 4-187; the sequence is THPANLSELL…VMILRSRFLD (184 aa). A PBC-A region spans residues 11–91; that stretch reads ELLDAVLKIN…EGVAGPDKGG (81 aa). Residues 94-187 are PBC-B; it reads GSDASGGDQA…VMILRSRFLD (94 aa). Residues 188 to 250 constitute a DNA-binding region (homeobox; TALE-type); that stretch reads ARRKRRNFSK…NKRIRYKKNM (63 aa).

This sequence belongs to the TALE/PBX homeobox family. Interacts with Meis protein psa-3. Interacts with homeobox protein nob-1. In terms of tissue distribution, expressed in head dopaminergic neurons.

Its subcellular location is the nucleus. Functionally, transcription factor that binds to the 5'-TGATNNAT(G/T)(G/A)-3' PBC/Hox lineage enhancer region of sem-2 to promote cell fate specification in the postembryonic mesoderm (also known as the M lineage). Required for the M lineage-specific expression of the transcription factor, mls-2. Required for asymmetric division of the T hypodermal cell, probably acting via the regulation of asymmetric expression of Meis protein psa-3 in concert with homeobox protein nob-1 and the Wnt-MAPK pathway. Has a role in the mig-13 pathway to promote the guidance, migration and positioning of Q neuroblasts and their descendants along the anteroposterior body axis and the anterior migration of BDU interneurons. Also required for normal vulval formation. Plays a role in regulating gene expression in dopaminergic neurons, acting in midbody PDE neurons, and acting redundantly with ceh-40 in head neurons. May activate dopamine pathway genes in concert with ETS domain-containing protein ast-1, and homeobox proteins ceh-43 and ceh-40. The protein is Homeobox protein ceh-20 of Caenorhabditis elegans.